The chain runs to 317 residues: tRNA dimethylallyltransferase (317 aa).

16-23 is a binding site for ATP; that stretch reads GPTASGKS. Residue 18-23 coordinates substrate; the sequence is TASGKS. 3 interaction with substrate tRNA regions span residues 41–44, 165–169, and 247–252; these read DSAQ, QRIQR, and RCVGYR.

Belongs to the IPP transferase family. Monomer. Requires Mg(2+) as cofactor.

It carries out the reaction adenosine(37) in tRNA + dimethylallyl diphosphate = N(6)-dimethylallyladenosine(37) in tRNA + diphosphate. In terms of biological role, catalyzes the transfer of a dimethylallyl group onto the adenine at position 37 in tRNAs that read codons beginning with uridine, leading to the formation of N6-(dimethylallyl)adenosine (i(6)A). This chain is tRNA dimethylallyltransferase, found in Nitrosomonas europaea (strain ATCC 19718 / CIP 103999 / KCTC 2705 / NBRC 14298).